Here is a 349-residue protein sequence, read N- to C-terminus: tRNA N6-adenosine threonylcarbamoyltransferase (349 aa).

Fe cation-binding residues include H115 and H119. Residues 137-141 (LASGG), D170, G183, and N281 each bind substrate. D309 serves as a coordination point for Fe cation.

It belongs to the KAE1 / TsaD family. The cofactor is Fe(2+).

It is found in the cytoplasm. The enzyme catalyses L-threonylcarbamoyladenylate + adenosine(37) in tRNA = N(6)-L-threonylcarbamoyladenosine(37) in tRNA + AMP + H(+). In terms of biological role, required for the formation of a threonylcarbamoyl group on adenosine at position 37 (t(6)A37) in tRNAs that read codons beginning with adenine. Is involved in the transfer of the threonylcarbamoyl moiety of threonylcarbamoyl-AMP (TC-AMP) to the N6 group of A37, together with TsaE and TsaB. TsaD likely plays a direct catalytic role in this reaction. The polypeptide is tRNA N6-adenosine threonylcarbamoyltransferase (Methylobacterium nodulans (strain LMG 21967 / CNCM I-2342 / ORS 2060)).